Reading from the N-terminus, the 380-residue chain is Cytochrome b (380 aa).

Helical transmembrane passes span 33 to 53 (FGSL…FLAM), 77 to 98 (WLIR…YLHI), 113 to 133 (WNVG…GYVL), and 178 to 198 (FFAF…LHLL). Residues His-83 and His-97 each coordinate heme b. Heme b-binding residues include His-182 and His-196. His-201 is an a ubiquinone binding site. Transmembrane regions (helical) follow at residues 226–246 (YKDL…ALFS), 288–308 (LGGV…PFLH), 320–340 (ASQF…WIGG), and 347–367 (FIII…VLFP).

It belongs to the cytochrome b family. In terms of assembly, the cytochrome bc1 complex contains 3 respiratory subunits (MT-CYB, CYC1 and UQCRFS1), 2 core proteins (UQCRC1 and UQCRC2) and probably 6 low-molecular weight proteins. The cofactor is heme b.

The protein localises to the mitochondrion inner membrane. In terms of biological role, component of the ubiquinol-cytochrome c reductase complex (complex III or cytochrome b-c1 complex) that is part of the mitochondrial respiratory chain. The b-c1 complex mediates electron transfer from ubiquinol to cytochrome c. Contributes to the generation of a proton gradient across the mitochondrial membrane that is then used for ATP synthesis. The protein is Cytochrome b (mt-cyb) of Scomber scombrus (Atlantic mackerel).